We begin with the raw amino-acid sequence, 339 residues long: DNA-directed RNA polymerase subunit alpha (339 aa).

The alpha N-terminal domain (alpha-NTD) stretch occupies residues 1 to 235 (MTIQKNWQEL…DQLNVFVNFE (235 aa)). The interval 251-339 (FNPAFLKKVD…ELAKRFEDHY (89 aa)) is alpha C-terminal domain (alpha-CTD).

It belongs to the RNA polymerase alpha chain family. Homodimer. The RNAP catalytic core consists of 2 alpha, 1 beta, 1 beta' and 1 omega subunit. When a sigma factor is associated with the core the holoenzyme is formed, which can initiate transcription.

The enzyme catalyses RNA(n) + a ribonucleoside 5'-triphosphate = RNA(n+1) + diphosphate. Functionally, DNA-dependent RNA polymerase catalyzes the transcription of DNA into RNA using the four ribonucleoside triphosphates as substrates. The sequence is that of DNA-directed RNA polymerase subunit alpha from Rhodopseudomonas palustris (strain BisB18).